A 276-amino-acid polypeptide reads, in one-letter code: 28 kDa ribonucleoprotein, chloroplastic (276 aa).

The N-terminal 57 residues, 1–57, are a transit peptide targeting the chloroplast; sequence MATNGCLISLPPFFTTTKSISSYPFLSTQLKPISLSSSLPTLLSLNKRTTQFPTFVS. 2 RRM domains span residues 97–175 and 191–269; these read AKLF…KAAP and YRIY…AAEE.

It localises to the plastid. The protein resides in the chloroplast. Probably involved in the 3'-end processing of chloroplast mRNA's. The sequence is that of 28 kDa ribonucleoprotein, chloroplastic from Nicotiana sylvestris (Wood tobacco).